Consider the following 781-residue polypeptide: Probable aminopeptidase 2 (781 aa).

Residues Glu105 and 237–241 contribute to the substrate site; that span reads GAMEN. His272 lines the Zn(2+) pocket. Glu273 acts as the Proton acceptor in catalysis. Residues His276 and Glu295 each coordinate Zn(2+).

The protein belongs to the peptidase M1 family. It depends on Zn(2+) as a cofactor.

The protein localises to the cytoplasm. The chain is Probable aminopeptidase 2 (ape2) from Sulfurisphaera tokodaii (strain DSM 16993 / JCM 10545 / NBRC 100140 / 7) (Sulfolobus tokodaii).